The chain runs to 296 residues: Elongation factor Ts (296 aa).

The involved in Mg(2+) ion dislocation from EF-Tu stretch occupies residues 82 to 85 (TDFV).

This sequence belongs to the EF-Ts family.

Its subcellular location is the cytoplasm. Functionally, associates with the EF-Tu.GDP complex and induces the exchange of GDP to GTP. It remains bound to the aminoacyl-tRNA.EF-Tu.GTP complex up to the GTP hydrolysis stage on the ribosome. This Coxiella burnetii (strain CbuK_Q154) (Coxiella burnetii (strain Q154)) protein is Elongation factor Ts.